Reading from the N-terminus, the 916-residue chain is Probable serine/threonine-protein kinase DDB_G0267514 (916 aa).

Disordered regions lie at residues 283 to 311, 461 to 518, and 550 to 646; these read SGGG…SGGS, NNNQ…SPLD, and FNNQ…EPPS. Composition is skewed to low complexity over residues 461-493 and 550-622; these read NNNQ…QQQP and FNNQ…LINN. The span at 623 to 646 shows a compositional bias: polar residues; sequence HSPNQYNNQGNILKNSGSVVEPPS. A Protein kinase domain is found at 662 to 916; sequence LKISSKLGEG…EILNLLNEIP (255 aa). ATP contacts are provided by residues 668 to 676 and lysine 689; that span reads LGEGTFGVV. Residue aspartate 784 is the Proton acceptor of the active site.

Belongs to the protein kinase superfamily. TKL Ser/Thr protein kinase family.

It catalyses the reaction L-seryl-[protein] + ATP = O-phospho-L-seryl-[protein] + ADP + H(+). The catalysed reaction is L-threonyl-[protein] + ATP = O-phospho-L-threonyl-[protein] + ADP + H(+). The protein is Probable serine/threonine-protein kinase DDB_G0267514 of Dictyostelium discoideum (Social amoeba).